The primary structure comprises 273 residues: Proteasome subunit alpha (273 aa).

Residues 231 to 273 (DDGAAGQPPSSSDTDTSAAEARKPTASAGSADLEGPEPERPDS) are disordered. Residues 238 to 249 (PPSSSDTDTSAA) show a composition bias toward low complexity.

This sequence belongs to the peptidase T1A family. In terms of assembly, the 20S proteasome core is composed of 14 alpha and 14 beta subunits that assemble into four stacked heptameric rings, resulting in a barrel-shaped structure. The two inner rings, each composed of seven catalytic beta subunits, are sandwiched by two outer rings, each composed of seven alpha subunits. The catalytic chamber with the active sites is on the inside of the barrel. Has a gated structure, the ends of the cylinder being occluded by the N-termini of the alpha-subunits. Is capped by the proteasome-associated ATPase, ARC.

It is found in the cytoplasm. The protein operates within protein degradation; proteasomal Pup-dependent pathway. The formation of the proteasomal ATPase ARC-20S proteasome complex, likely via the docking of the C-termini of ARC into the intersubunit pockets in the alpha-rings, may trigger opening of the gate for substrate entry. Interconversion between the open-gate and close-gate conformations leads to a dynamic regulation of the 20S proteasome proteolysis activity. In terms of biological role, component of the proteasome core, a large protease complex with broad specificity involved in protein degradation. In Salinispora arenicola (strain CNS-205), this protein is Proteasome subunit alpha.